A 331-amino-acid polypeptide reads, in one-letter code: 6-phosphogluconolactonase (331 aa).

Belongs to the cycloisomerase 2 family.

It carries out the reaction 6-phospho-D-glucono-1,5-lactone + H2O = 6-phospho-D-gluconate + H(+). It participates in carbohydrate degradation; pentose phosphate pathway; D-ribulose 5-phosphate from D-glucose 6-phosphate (oxidative stage): step 2/3. Catalyzes the hydrolysis of 6-phosphogluconolactone to 6-phosphogluconate. The sequence is that of 6-phosphogluconolactonase from Klebsiella pneumoniae (strain 342).